Consider the following 338-residue polypeptide: Tryptophan--tRNA ligase (338 aa).

ATP contacts are provided by residues Gln18 to Ser20 and Gly26 to Asn27. Residues Pro19–Asn27 carry the 'HIGH' region motif. L-tryptophan is bound at residue Asp142. ATP-binding positions include Gly154–Asp156, Ile193, and Lys202–Ser206. The 'KMSKS' region signature appears at Lys202–Ser206.

It belongs to the class-I aminoacyl-tRNA synthetase family. As to quaternary structure, homodimer.

Its subcellular location is the cytoplasm. It carries out the reaction tRNA(Trp) + L-tryptophan + ATP = L-tryptophyl-tRNA(Trp) + AMP + diphosphate + H(+). Catalyzes the attachment of tryptophan to tRNA(Trp). The sequence is that of Tryptophan--tRNA ligase from Clostridium tetani (strain Massachusetts / E88).